We begin with the raw amino-acid sequence, 433 residues long: Homogentisate 1,2-dioxygenase (433 aa).

The Proton acceptor role is filled by H288. 2 residues coordinate Fe cation: H331 and E337. Residues Y346 and H367 each contribute to the homogentisate site. Residue H367 participates in Fe cation binding.

The protein belongs to the homogentisate dioxygenase family. Hexamer; dimer of trimers. Fe cation is required as a cofactor.

It carries out the reaction homogentisate + O2 = 4-maleylacetoacetate + H(+). It participates in amino-acid degradation; L-phenylalanine degradation; acetoacetate and fumarate from L-phenylalanine: step 4/6. In terms of biological role, involved in the catabolism of homogentisate (2,5-dihydroxyphenylacetate or 2,5-OH-PhAc), a central intermediate in the degradation of phenylalanine and tyrosine. Catalyzes the oxidative ring cleavage of the aromatic ring of homogentisate to yield maleylacetoacetate. This is Homogentisate 1,2-dioxygenase from Pseudomonas putida (strain W619).